We begin with the raw amino-acid sequence, 270 residues long: Phosphate import ATP-binding protein PstB 1 (270 aa).

An ABC transporter domain is found at leucine 24 to isoleucine 265. Position 56 to 63 (glycine 56 to serine 63) interacts with ATP.

It belongs to the ABC transporter superfamily. Phosphate importer (TC 3.A.1.7) family. The complex is composed of two ATP-binding proteins (PstB), two transmembrane proteins (PstC and PstA) and a solute-binding protein (PstS).

It is found in the cell inner membrane. The catalysed reaction is phosphate(out) + ATP + H2O = ADP + 2 phosphate(in) + H(+). Its function is as follows. Part of the ABC transporter complex PstSACB involved in phosphate import. Responsible for energy coupling to the transport system. The sequence is that of Phosphate import ATP-binding protein PstB 1 from Yersinia pestis bv. Antiqua (strain Antiqua).